A 393-amino-acid polypeptide reads, in one-letter code: ATP phosphoribosyltransferase regulatory subunit (393 aa).

Belongs to the class-II aminoacyl-tRNA synthetase family. HisZ subfamily. Heteromultimer composed of HisG and HisZ subunits.

Its subcellular location is the cytoplasm. Its pathway is amino-acid biosynthesis; L-histidine biosynthesis; L-histidine from 5-phospho-alpha-D-ribose 1-diphosphate: step 1/9. In terms of biological role, required for the first step of histidine biosynthesis. May allow the feedback regulation of ATP phosphoribosyltransferase activity by histidine. In Nitrosospira multiformis (strain ATCC 25196 / NCIMB 11849 / C 71), this protein is ATP phosphoribosyltransferase regulatory subunit.